A 326-amino-acid polypeptide reads, in one-letter code: Phosphate acyltransferase (326 aa).

It belongs to the PlsX family. As to quaternary structure, homodimer. Probably interacts with PlsY.

It localises to the cytoplasm. It catalyses the reaction a fatty acyl-[ACP] + phosphate = an acyl phosphate + holo-[ACP]. The protein operates within lipid metabolism; phospholipid metabolism. Functionally, catalyzes the reversible formation of acyl-phosphate (acyl-PO(4)) from acyl-[acyl-carrier-protein] (acyl-ACP). This enzyme utilizes acyl-ACP as fatty acyl donor, but not acyl-CoA. The chain is Phosphate acyltransferase from Petrotoga mobilis (strain DSM 10674 / SJ95).